The primary structure comprises 232 residues: Small ribosomal subunit protein uS3 (232 aa).

Residues Val39–Arg107 enclose the KH type-2 domain.

It belongs to the universal ribosomal protein uS3 family. Part of the 30S ribosomal subunit. Forms a tight complex with proteins S10 and S14.

In terms of biological role, binds the lower part of the 30S subunit head. Binds mRNA in the 70S ribosome, positioning it for translation. In Aliivibrio fischeri (strain MJ11) (Vibrio fischeri), this protein is Small ribosomal subunit protein uS3.